Consider the following 380-residue polypeptide: Deoxyguanosinetriphosphate triphosphohydrolase-like protein (380 aa).

The segment at 1 to 28 (MYAPYATMPDRSRGRAVPEEESSFRSPF) is disordered. The HD domain occupies 62-198 (RLTHSIEVGQ…AALADDIAYN (137 aa)).

The protein belongs to the dGTPase family. Type 2 subfamily.

The sequence is that of Deoxyguanosinetriphosphate triphosphohydrolase-like protein from Ruegeria sp. (strain TM1040) (Silicibacter sp.).